We begin with the raw amino-acid sequence, 81 residues long: Three-finger toxin 3FTx-Oxy6 (81 aa).

The N-terminal stretch at Met1 to Thr21 is a signal peptide. 4 cysteine pairs are disulfide-bonded: Cys24–Cys43, Cys36–Cys61, Cys65–Cys73, and Cys74–Cys79.

It belongs to the three-finger toxin family. Short-chain subfamily. In terms of tissue distribution, expressed by the venom gland.

The protein localises to the secreted. The sequence is that of Three-finger toxin 3FTx-Oxy6 from Oxyuranus microlepidotus (Inland taipan).